Consider the following 349-residue polypeptide: Anthranilate phosphoribosyltransferase (349 aa).

5-phospho-alpha-D-ribose 1-diphosphate contacts are provided by residues G82, 85–86 (GD), T90, 92–95 (NVST), 110–118 (KHGNRSVSS), and G122. Residue G82 coordinates anthranilate. Residue S94 coordinates Mg(2+). N113 is an anthranilate binding site. R168 contributes to the anthranilate binding site. Mg(2+) contacts are provided by D232 and E233.

The protein belongs to the anthranilate phosphoribosyltransferase family. In terms of assembly, homodimer. It depends on Mg(2+) as a cofactor.

It carries out the reaction N-(5-phospho-beta-D-ribosyl)anthranilate + diphosphate = 5-phospho-alpha-D-ribose 1-diphosphate + anthranilate. It functions in the pathway amino-acid biosynthesis; L-tryptophan biosynthesis; L-tryptophan from chorismate: step 2/5. Functionally, catalyzes the transfer of the phosphoribosyl group of 5-phosphorylribose-1-pyrophosphate (PRPP) to anthranilate to yield N-(5'-phosphoribosyl)-anthranilate (PRA). This is Anthranilate phosphoribosyltransferase from Methanosphaera stadtmanae (strain ATCC 43021 / DSM 3091 / JCM 11832 / MCB-3).